The following is a 201-amino-acid chain: Large ribosomal subunit protein uL4 (201 aa).

The interval 44–66 (KAQKTRAEVRGGGKKPWRQKGTG) is disordered. Residues 55–66 (GGKKPWRQKGTG) are compositionally biased toward basic residues.

The protein belongs to the universal ribosomal protein uL4 family. As to quaternary structure, part of the 50S ribosomal subunit.

In terms of biological role, one of the primary rRNA binding proteins, this protein initially binds near the 5'-end of the 23S rRNA. It is important during the early stages of 50S assembly. It makes multiple contacts with different domains of the 23S rRNA in the assembled 50S subunit and ribosome. Its function is as follows. Forms part of the polypeptide exit tunnel. This is Large ribosomal subunit protein uL4 from Alteromonas mediterranea (strain DSM 17117 / CIP 110805 / LMG 28347 / Deep ecotype).